Consider the following 248-residue polypeptide: UDP-2,3-diacylglucosamine hydrolase (248 aa).

The Mn(2+) site is built by aspartate 8, histidine 10, aspartate 41, asparagine 79, and histidine 114. Residue 79–80 participates in substrate binding; sequence NR. Substrate contacts are provided by aspartate 122, serine 160, aspartate 171, and histidine 202. The Mn(2+) site is built by histidine 202 and histidine 204.

It belongs to the LpxH family. It depends on Mn(2+) as a cofactor.

Its subcellular location is the cell inner membrane. The enzyme catalyses UDP-2-N,3-O-bis[(3R)-3-hydroxytetradecanoyl]-alpha-D-glucosamine + H2O = 2-N,3-O-bis[(3R)-3-hydroxytetradecanoyl]-alpha-D-glucosaminyl 1-phosphate + UMP + 2 H(+). It participates in glycolipid biosynthesis; lipid IV(A) biosynthesis; lipid IV(A) from (3R)-3-hydroxytetradecanoyl-[acyl-carrier-protein] and UDP-N-acetyl-alpha-D-glucosamine: step 4/6. Hydrolyzes the pyrophosphate bond of UDP-2,3-diacylglucosamine to yield 2,3-diacylglucosamine 1-phosphate (lipid X) and UMP by catalyzing the attack of water at the alpha-P atom. Involved in the biosynthesis of lipid A, a phosphorylated glycolipid that anchors the lipopolysaccharide to the outer membrane of the cell. This Stenotrophomonas maltophilia (strain R551-3) protein is UDP-2,3-diacylglucosamine hydrolase.